Here is a 363-residue protein sequence, read N- to C-terminus: Tetraacyldisaccharide 4'-kinase (363 aa).

Residue 62 to 69 coordinates ATP; that stretch reads RVGGTGKT.

This sequence belongs to the LpxK family.

The enzyme catalyses a lipid A disaccharide + ATP = a lipid IVA + ADP + H(+). It participates in glycolipid biosynthesis; lipid IV(A) biosynthesis; lipid IV(A) from (3R)-3-hydroxytetradecanoyl-[acyl-carrier-protein] and UDP-N-acetyl-alpha-D-glucosamine: step 6/6. Its function is as follows. Transfers the gamma-phosphate of ATP to the 4'-position of a tetraacyldisaccharide 1-phosphate intermediate (termed DS-1-P) to form tetraacyldisaccharide 1,4'-bis-phosphate (lipid IVA). In Polynucleobacter asymbioticus (strain DSM 18221 / CIP 109841 / QLW-P1DMWA-1) (Polynucleobacter necessarius subsp. asymbioticus), this protein is Tetraacyldisaccharide 4'-kinase.